Here is an 801-residue protein sequence, read N- to C-terminus: MGFYGGGSMASGRPESTGIDSLGIGKILAVYIKDNENLAIDEDKLQLTAELIRVFSASPGRDIVSQVNEDGGGSFSLSLDLQQFKKISDIENFFINLEDNPKGVIPCMNAAVHKVLFDQWETNEFENVMKINVRLHNYPESSISLKNLRAAYIGKLVTVHGTVVKVSTVKPLVTQMAFDCGKCKTGITREFTDGKFSPPLKCDSHGCKSKTFTPIRSSAQTIDFQKIRVQELQKPEDHEEGRVPRTVECELMEDLVDICIPGDVVTVTGIIGVINNYMDIGGGKSKTKNQGFYYLFIEAVSVKNTKRQSAFENSEDSSSSAQTADVGDLYSFSQRDLEFIVKFKEEYGSDTFRRILHSVCPSIYGHEIVKAGITLSLFGGVRKHSMDRNKVPVRGDIHVIIVGDPGLGKSQLLQAAAAISPRGIYVCGNATTRAGLTVAVVKDSMTNDYAFEAGAMVLADGGLCCIDEFDKMTTEHQALLEAMEQQCVSVAKAGLVASLSARTSVIAAANPVGGHYNRAKTVNENLKMSAALLSRFDLVFILLDKPDELLDKQVSEHIMSLHSASGETSPALKKFKPVNAASQNAGYANMHAEGNSLLSRLRLDSEKDDDFSPVPGQLLRKYISYARNFVNPKMSKDAGEIIQKFYLKLRDHNTSADSTPITARQLESLVRLAQARARVDLREEITVQDAMDVVEIMKESLYDKLIDEHGVVDFGRSGGMSQQKEAKRFLSALDKQSELQQKDCFSVSEMYSLADRIGLRVPDIDTFLENLNIAGYLLKKGPKTYQVLSSSYSRSQSSRSR.

The segment at 180–207 (CGKCKTGITREFTDGKFSPPLKCDSHGC) adopts a C4-type zinc-finger fold. Positions 351–558 (TFRRILHSVC…LLDKQVSEHI (208 aa)) constitute an MCM domain. 403-410 (GDPGLGKS) contributes to the ATP binding site. The Arginine finger signature appears at 534-537 (SRFD).

The protein belongs to the MCM family.

The protein resides in the nucleus. The catalysed reaction is ATP + H2O = ADP + phosphate + H(+). Functionally, probable DNA helicase that plays a role in meiotic double-strand break (DSB) repair, but seems not required for recombination with the homologous chromosome. May be involved with RAD51 in a backup pathway that repairs meiotic DSB without giving meiotic crossover, in parallel to the meiotic homologous recombination which relies on DMC1. The chain is Probable DNA helicase MCM8 (MCM8) from Arabidopsis thaliana (Mouse-ear cress).